Here is a 460-residue protein sequence, read N- to C-terminus: ATP synthase subunit beta (460 aa).

Residue 150 to 157 (GGAGVGKT) participates in ATP binding.

Belongs to the ATPase alpha/beta chains family. F-type ATPases have 2 components, CF(1) - the catalytic core - and CF(0) - the membrane proton channel. CF(1) has five subunits: alpha(3), beta(3), gamma(1), delta(1), epsilon(1). CF(0) has three main subunits: a(1), b(2) and c(9-12). The alpha and beta chains form an alternating ring which encloses part of the gamma chain. CF(1) is attached to CF(0) by a central stalk formed by the gamma and epsilon chains, while a peripheral stalk is formed by the delta and b chains.

Its subcellular location is the cell inner membrane. The catalysed reaction is ATP + H2O + 4 H(+)(in) = ADP + phosphate + 5 H(+)(out). Functionally, produces ATP from ADP in the presence of a proton gradient across the membrane. The catalytic sites are hosted primarily by the beta subunits. The polypeptide is ATP synthase subunit beta (Citrobacter koseri (strain ATCC BAA-895 / CDC 4225-83 / SGSC4696)).